The chain runs to 477 residues: Myc-associated zinc finger protein (477 aa).

Disordered stretches follow at residues 59-78 (AQSP…APAA) and 121-144 (TVDT…SAPA). Residues 130–140 (PPAPPPPPPAV) show a composition bias toward pro residues. C2H2-type zinc fingers lie at residues 190 to 212 (YICA…EAIH), 279 to 301 (HACE…KLSH), 307 to 329 (YQCP…VRSH), and 337 to 360 (YNCS…RQVH). A Phosphoserine modification is found at Ser-361. Residues 366 to 388 (FKCEKCEAAFATKDRLRAHTVRH) form a C2H2-type 5 zinc finger. Residues 392–413 (VPCHVCGKMLSSAYISDHMKVH) form a C2H2-type 6; atypical zinc finger.

Interacts with BPTF. In terms of tissue distribution, expressed in Purkinje cells in the brain (at protein level).

The protein resides in the nucleus. Its function is as follows. Transcriptional regulator. Acts as a transcriptional activator that binds to purine-rich GAGA sites found in the promoter of many genes including insulin I and II and islet amyloid polypeptide. The protein is Myc-associated zinc finger protein (Maz) of Mus musculus (Mouse).